The following is a 953-amino-acid chain: Zinc finger protein 618 (953 aa).

Met1 bears the N-acetylmethionine mark. Residues 1 to 56 (MSQPDGAAAPQVDGASAPGRKSAVNRERLKRSQKSSKVEGPEPVPAEASLSAEQGT) are disordered. Glycyl lysine isopeptide (Lys-Gly) (interchain with G-Cter in SUMO2) cross-links involve residues Lys63 and Lys81. 2 C2H2-type zinc fingers span residues 146-168 (YECG…VRAH) and 187-209 (YTCD…RDLH). A Glycyl lysine isopeptide (Lys-Gly) (interchain with G-Cter in SUMO2) cross-link involves residue Lys238. The segment at 255–277 (YTCEFCGKQYKYYTPYQEHVALH) adopts a C2H2-type 3 zinc-finger fold. 2 disordered regions span residues 283–305 (APGW…EVTP) and 337–390 (TPPA…SSEP). Polar residues predominate over residues 339-354 (PATQTQTFRAPNSGSP). Positions 365 to 379 (FSRRVESKAQNHFEE) are enriched in basic and acidic residues. The C2H2-type 4 zinc-finger motif lies at 391–413 (YTCGACGIQFQFYSNLLEHMQSH). Positions 419 to 428 (NNITSNQSRS) are enriched in polar residues. Residues 419 to 461 (NNITSNQSRSPPAAVEEKWKPQAQRNSANNTTTSGLTPNSVIP) are disordered. A Glycyl lysine isopeptide (Lys-Gly) (interchain with G-Cter in SUMO2) cross-link involves residue Lys436. A compositionally biased stretch (polar residues) spans 441-458 (AQRNSANNTTTSGLTPNS).

It belongs to the krueppel C2H2-type zinc-finger protein family. In terms of assembly, interacts with UHRF2.

It localises to the nucleus. The protein localises to the chromosome. In terms of biological role, regulates UHRF2 function as a specific 5-hydroxymethylcytosine (5hmC) reader by regulating its chromatin localization. This chain is Zinc finger protein 618 (Znf618), found in Mus musculus (Mouse).